The primary structure comprises 186 residues: MKFLFDLFPVILFFAAFKVAGIYVATTVAMVATVAQIAWVWFKHRKVDAMQWLSLLIIVVFGGATLIFHNDTFIKWKPTVLYWMFGVVLLGSAVLLRKNLIRAMMEQQVSLPEPMWGRLNLVWSLFFLAMGGLNLYVAYHFDTDVWVNFKLFGSMGLMVVFILVQSVWLARHMQERPAGANPQDDR.

Helical transmembrane passes span 3–23, 24–44, 49–69, 76–96, 121–141, and 149–169; these read FLFDLFPVILFFAAFKVAGIY, VATTVAMVATVAQIAWVWFKH, AMQWLSLLIIVVFGGATLIFH, WKPTVLYWMFGVVLLGSAVLL, LVWSLFFLAMGGLNLYVAYHF, and FKLFGSMGLMVVFILVQSVWL.

The protein belongs to the YciB family.

It is found in the cell inner membrane. Plays a role in cell envelope biogenesis, maintenance of cell envelope integrity and membrane homeostasis. The sequence is that of Inner membrane-spanning protein YciB from Ralstonia nicotianae (strain ATCC BAA-1114 / GMI1000) (Ralstonia solanacearum).